The primary structure comprises 386 residues: S-adenosylmethionine synthase (386 aa).

H17 contacts ATP. Residue D19 coordinates Mg(2+). A K(+)-binding site is contributed by E45. Positions 58 and 101 each coordinate L-methionine. The flexible loop stretch occupies residues 101–111; the sequence is QSPDISQGVTE. Residues 168-170, D242, 248-249, A265, and K269 each bind ATP; these read DAK and RK. D242 serves as a coordination point for L-methionine. K273 lines the L-methionine pocket.

It belongs to the AdoMet synthase family. Homotetramer; dimer of dimers. Mg(2+) is required as a cofactor. Requires K(+) as cofactor.

Its subcellular location is the cytoplasm. It carries out the reaction L-methionine + ATP + H2O = S-adenosyl-L-methionine + phosphate + diphosphate. It participates in amino-acid biosynthesis; S-adenosyl-L-methionine biosynthesis; S-adenosyl-L-methionine from L-methionine: step 1/1. Its function is as follows. Catalyzes the formation of S-adenosylmethionine (AdoMet) from methionine and ATP. The overall synthetic reaction is composed of two sequential steps, AdoMet formation and the subsequent tripolyphosphate hydrolysis which occurs prior to release of AdoMet from the enzyme. The sequence is that of S-adenosylmethionine synthase from Leptospira interrogans serogroup Icterohaemorrhagiae serovar copenhageni (strain Fiocruz L1-130).